The primary structure comprises 465 residues: Ribulose bisphosphate carboxylase large chain (465 aa).

Position 4 is an N6,N6,N6-trimethyllysine (K4). Positions 113 and 163 each coordinate substrate. The active-site Proton acceptor is K165. Substrate is bound at residue K167. Residues K191, D193, and E194 each coordinate Mg(2+). At K191 the chain carries N6-carboxylysine. Catalysis depends on H284, which acts as the Proton acceptor. 3 residues coordinate substrate: R285, H317, and S369.

Belongs to the RuBisCO large chain family. Type I subfamily. In terms of assembly, heterohexadecamer of 8 large chains and 8 small chains; disulfide-linked. The disulfide link is formed within the large subunit homodimers. It depends on Mg(2+) as a cofactor. The disulfide bond which can form in the large chain dimeric partners within the hexadecamer appears to be associated with oxidative stress and protein turnover.

The protein localises to the plastid. Its subcellular location is the chloroplast. The enzyme catalyses 2 (2R)-3-phosphoglycerate + 2 H(+) = D-ribulose 1,5-bisphosphate + CO2 + H2O. The catalysed reaction is D-ribulose 1,5-bisphosphate + O2 = 2-phosphoglycolate + (2R)-3-phosphoglycerate + 2 H(+). In terms of biological role, ruBisCO catalyzes two reactions: the carboxylation of D-ribulose 1,5-bisphosphate, the primary event in carbon dioxide fixation, as well as the oxidative fragmentation of the pentose substrate in the photorespiration process. Both reactions occur simultaneously and in competition at the same active site. The sequence is that of Ribulose bisphosphate carboxylase large chain from Clitoria ternatea (Butterfly pea).